The chain runs to 244 residues: Ferric aerobactin reductase IutB (244 aa).

Cys220, Cys221, Cys232, and Cys235 together coordinate [2Fe-2S] cluster.

In terms of assembly, monomer. [2Fe-2S] cluster is required as a cofactor.

It is found in the cytoplasm. The catalysed reaction is 2 a Fe(II)-siderophore + NAD(+) + H(+) = 2 a Fe(III)-siderophore + NADH. It carries out the reaction 2 a Fe(II)-siderophore + NADP(+) + H(+) = 2 a Fe(III)-siderophore + NADPH. Functionally, ferric-siderophore reductase involved in iron removal from the siderophores after their transport into the cell. Acts as a major ferric-aerobactin reductase catalyzing the reduction of Fe(3+)-aerobactin, a citrate-hydroxamate siderophore produced by other bacteria. Catalyzes reduction of Fe(3+)-vulnibactin, a catecholate siderophore synthesized by V.vulnificus, in the absence of VuuB. Catalyzes reduction of ferrioxamine B and Fe(3+)-vibriobactin in vitro. No activity with Fe(3+)-enterobactin. Catalyzes reduction of ferric chelating compound Fe(3+)-nitrilotriacetic acid (NTA) in the presence of NADH, NADPH or reduced glutathione (GSH) as its electron donor in vitro. Also catalyzes reduction of ferric chelating compounds Fe(3+)-citrate and Fe(3+)-EDTA as well as non-complexed FeCl3 in the presence of GSH as its electron donor in vitro. Highest activity with Fe(3+)-NTA as electron acceptor and GSH as donor. The polypeptide is Ferric aerobactin reductase IutB (Vibrio vulnificus).